A 426-amino-acid chain; its full sequence is 3-phosphoshikimate 1-carboxyvinyltransferase (426 aa).

Positions 22, 23, and 27 each coordinate 3-phosphoshikimate. Residue lysine 22 participates in phosphoenolpyruvate binding. Residues glycine 96 and arginine 124 each contribute to the phosphoenolpyruvate site. 3-phosphoshikimate-binding residues include serine 170, serine 171, glutamine 172, serine 198, aspartate 314, asparagine 337, and lysine 341. Phosphoenolpyruvate is bound at residue glutamine 172. Aspartate 314 functions as the Proton acceptor in the catalytic mechanism. Phosphoenolpyruvate-binding residues include arginine 345, arginine 387, and lysine 412.

The protein belongs to the EPSP synthase family. In terms of assembly, monomer.

It localises to the cytoplasm. It catalyses the reaction 3-phosphoshikimate + phosphoenolpyruvate = 5-O-(1-carboxyvinyl)-3-phosphoshikimate + phosphate. It participates in metabolic intermediate biosynthesis; chorismate biosynthesis; chorismate from D-erythrose 4-phosphate and phosphoenolpyruvate: step 6/7. In terms of biological role, catalyzes the transfer of the enolpyruvyl moiety of phosphoenolpyruvate (PEP) to the 5-hydroxyl of shikimate-3-phosphate (S3P) to produce enolpyruvyl shikimate-3-phosphate and inorganic phosphate. The chain is 3-phosphoshikimate 1-carboxyvinyltransferase from Shewanella piezotolerans (strain WP3 / JCM 13877).